The sequence spans 267 residues: Putative hydro-lyase Arth_3576 (267 aa).

This sequence belongs to the D-glutamate cyclase family.

The sequence is that of Putative hydro-lyase Arth_3576 from Arthrobacter sp. (strain FB24).